Here is a 1043-residue protein sequence, read N- to C-terminus: tRNA wybutosine-synthesizing protein 2/3/4 (1043 aa).

The segment at 1–233 (MEFDRRKAAA…PVLQNGAKHG (233 aa)) is tRNA wybutosine-synthesizing protein 3 homolog. Residues 53 to 75 (RVSVLAQPPPPQQADPGGAKTKK) are disordered. 4 Kelch repeats span residues 360–410 (DIYV…AVDR), 412–460 (VYVF…SYGS), 461–510 (KLFL…IYKD), and 512–559 (LGIL…VIID). The segment at 700 to 1041 (QPDDSCVFEE…RHLVVDVKCR (342 aa)) is tRNA wybutosine-synthesizing protein 2 homolog. Residues K874 and 942–943 (DN) contribute to the S-adenosyl-L-methionine site.

It in the C-terminal section; belongs to the class I-like SAM-binding methyltransferase superfamily. TRM5/TYW2 family. This sequence in the N-terminal section; belongs to the TYW3 family.

The enzyme catalyses 4-demethyl-7-[(3S)-3-amino-3-carboxypropyl]wyosine(37) in tRNA(Phe) + S-adenosyl-L-methionine = 7-[(3S)-3-amino-3-carboxypropyl]wyosine(37) in tRNA(Phe) + S-adenosyl-L-homocysteine + H(+). It carries out the reaction 4-demethylwyosine(37) in tRNA(Phe) + S-adenosyl-L-methionine = 4-demethyl-7-[(3S)-3-amino-3-carboxypropyl]wyosine(37) in tRNA(Phe) + S-methyl-5'-thioadenosine + H(+). It participates in tRNA modification; wybutosine-tRNA(Phe) biosynthesis. Its function is as follows. S-adenosyl-L-methionine-dependent transferase that acts as a component of the wybutosine biosynthesis pathway. Wybutosine is a hyper modified guanosine with a tricyclic base found at the 3'-position adjacent to the anticodon of eukaryotic phenylalanine tRNA. The protein is tRNA wybutosine-synthesizing protein 2/3/4 of Oryza sativa subsp. japonica (Rice).